Consider the following 372-residue polypeptide: High-affinity lysophosphatidic acid receptor (372 aa).

The Extracellular portion of the chain corresponds to Met1–Ala38. N-linked (GlcNAc...) asparagine glycans are attached at residues Asn4 and Asn15. The chain crosses the membrane as a helical span at residues Ile39–Val59. The Cytoplasmic portion of the chain corresponds to Tyr60–Asp80. Residues Ile81–Leu101 form a helical membrane-spanning segment. Topologically, residues Phe102–Gln108 are extracellular. The helical transmembrane segment at Ile109–Ser129 threads the bilayer. Over Val130–Lys149 the chain is Cytoplasmic. The chain crosses the membrane as a helical span at residues Ile150–Trp170. The Extracellular segment spans residues Thr171–Met198. A helical transmembrane segment spans residues Leu199 to Leu219. Residues Asn220–Thr268 are Cytoplasmic-facing. The chain crosses the membrane as a helical span at residues Ile269–Leu289. Topologically, residues Ser290–Ser301 are extracellular. The chain crosses the membrane as a helical span at residues Phe302–Tyr324. At Cys325–Val372 the chain is on the cytoplasmic side.

The protein belongs to the G-protein coupled receptor 1 family. Ubiquitously expressed.

It is found in the cell membrane. Its function is as follows. Highly selective receptor for lysophosphatidic acid (LPA), a mediator of diverse cellular activities. This chain is High-affinity lysophosphatidic acid receptor, found in Xenopus laevis (African clawed frog).